Here is a 590-residue protein sequence, read N- to C-terminus: Major surface protein MspTL (590 aa).

Positions 1–19 (MKKILAFFLVFALAGAVFA) are cleaved as a signal peptide.

It is found in the cell outer membrane. Functionally, major component of the outer membrane. The sequence is that of Major surface protein MspTL (mspTL) from Treponema lecithinolyticum.